The primary structure comprises 528 residues: Probable feruloyl esterase B-1 (528 aa).

The first 19 residues, 1-19, serve as a signal peptide directing secretion; sequence MMWWFLLIGLASAAATASS. 6 disulfides stabilise this stretch: Cys-29–Cys-78, Cys-64–Cys-117, Cys-190–Cys-445, Cys-259–Cys-276, Cys-285–Cys-295, and Cys-505–Cys-527. 2 N-linked (GlcNAc...) asparagine glycosylation sites follow: Asn-83 and Asn-101. Catalysis depends on Ser-191, which acts as the Acyl-ester intermediate. Ca(2+) is bound by residues Asp-260, Asp-263, Ala-265, Asp-267, and Ile-269. N-linked (GlcNAc...) asparagine glycans are attached at residues Asn-286, Asn-354, and Asn-385. Residues Asp-404 and His-444 each act as charge relay system in the active site.

This sequence belongs to the tannase family.

It is found in the secreted. It carries out the reaction feruloyl-polysaccharide + H2O = ferulate + polysaccharide.. Involved in degradation of plant cell walls. Hydrolyzes the feruloyl-arabinose ester bond in arabinoxylans as well as the feruloyl-galactose and feruloyl-arabinose ester bonds in pectin. The protein is Probable feruloyl esterase B-1 (faeB-1) of Aspergillus fumigatus (strain ATCC MYA-4609 / CBS 101355 / FGSC A1100 / Af293) (Neosartorya fumigata).